The chain runs to 258 residues: Isoprenyl transferase 2 (258 aa).

Asp39 is an active-site residue. Residue Asp39 participates in Mg(2+) binding. Residues 40–43, Trp44, Arg52, His57, and 85–87 contribute to the substrate site; these read GNRR and SND. Asn88 acts as the Proton acceptor in catalysis. Substrate-binding positions include Arg92, Arg207, and 213-215; that span reads RLS. Residue Glu226 coordinates Mg(2+).

Belongs to the UPP synthase family. In terms of assembly, homodimer. The cofactor is Mg(2+).

Functionally, catalyzes the condensation of isopentenyl diphosphate (IPP) with allylic pyrophosphates generating different type of terpenoids. This is Isoprenyl transferase 2 from Tropheryma whipplei (strain Twist) (Whipple's bacillus).